A 110-amino-acid chain; its full sequence is MSNDENRSGSPTGPNTSVITKVKPKTKRPNLYRVLILNDDYTPMEFVVHVLEKFFQKDVEAATKIMLHVHHHGIGECGVFTYEIAETKVTQVMDFARKHQHPLQCVMEKK.

The disordered stretch occupies residues 1–24 (MSNDENRSGSPTGPNTSVITKVKP). The span at 8-19 (SGSPTGPNTSVI) shows a compositional bias: polar residues.

Belongs to the ClpS family. Binds to the N-terminal domain of the chaperone ClpA.

Functionally, involved in the modulation of the specificity of the ClpAP-mediated ATP-dependent protein degradation. In Bradyrhizobium diazoefficiens (strain JCM 10833 / BCRC 13528 / IAM 13628 / NBRC 14792 / USDA 110), this protein is ATP-dependent Clp protease adapter protein ClpS 2.